A 197-amino-acid polypeptide reads, in one-letter code: ATP-dependent Clp protease proteolytic subunit (197 aa).

S100 serves as the catalytic Nucleophile. H125 is an active-site residue.

This sequence belongs to the peptidase S14 family. As to quaternary structure, component of the chloroplastic Clp protease core complex.

It localises to the plastid. It is found in the chloroplast stroma. The catalysed reaction is Hydrolysis of proteins to small peptides in the presence of ATP and magnesium. alpha-casein is the usual test substrate. In the absence of ATP, only oligopeptides shorter than five residues are hydrolyzed (such as succinyl-Leu-Tyr-|-NHMec, and Leu-Tyr-Leu-|-Tyr-Trp, in which cleavage of the -Tyr-|-Leu- and -Tyr-|-Trp bonds also occurs).. In terms of biological role, cleaves peptides in various proteins in a process that requires ATP hydrolysis. Has a chymotrypsin-like activity. Plays a major role in the degradation of misfolded proteins. In Angiopteris evecta (Mule's foot fern), this protein is ATP-dependent Clp protease proteolytic subunit.